The following is a 265-amino-acid chain: Type III pantothenate kinase (265 aa).

An ATP-binding site is contributed by Asp17–Ser24. Gly114–Val117 is a substrate binding site. Catalysis depends on Asp116, which acts as the Proton acceptor. Residue Asp137 participates in K(+) binding. ATP is bound at residue Thr140. Thr192 contacts substrate.

Belongs to the type III pantothenate kinase family. Homodimer. It depends on NH4(+) as a cofactor. The cofactor is K(+).

The protein localises to the cytoplasm. It catalyses the reaction (R)-pantothenate + ATP = (R)-4'-phosphopantothenate + ADP + H(+). The protein operates within cofactor biosynthesis; coenzyme A biosynthesis; CoA from (R)-pantothenate: step 1/5. Catalyzes the phosphorylation of pantothenate (Pan), the first step in CoA biosynthesis. In Borrelia hermsii (strain HS1 / DAH), this protein is Type III pantothenate kinase.